We begin with the raw amino-acid sequence, 216 residues long: MRLGIYGGTFDPIHIGHLRMAVEVQEKFSLDKVVLIPCNTPPHKENGAAASARDRLAMVRMAVEGRAGLEASDMEISQGGPSYTVATLEALQSPDKELFFILGLDAFLEIHTWKEYERLFSLAHFIVLARPWQGDRAEMFHVEQYIRENLPGLAVPEPDQGYFRALHENKRIYFAQTTALDISATHIRKTVNQGKSIAFLAPESVEKYIKRQGLYL.

The protein belongs to the NadD family.

The enzyme catalyses nicotinate beta-D-ribonucleotide + ATP + H(+) = deamido-NAD(+) + diphosphate. The protein operates within cofactor biosynthesis; NAD(+) biosynthesis; deamido-NAD(+) from nicotinate D-ribonucleotide: step 1/1. Its function is as follows. Catalyzes the reversible adenylation of nicotinate mononucleotide (NaMN) to nicotinic acid adenine dinucleotide (NaAD). This is Probable nicotinate-nucleotide adenylyltransferase from Desulfatibacillum aliphaticivorans.